The chain runs to 356 residues: Fructose-bisphosphate aldolase 1, chloroplastic (356 aa).

The transit peptide at 1–6 (GLTIRA) directs the protein to the chloroplast. Substrate-binding residues include Arg53 and Lys143. Catalysis depends on Glu183, which acts as the Proton acceptor. The Schiff-base intermediate with dihydroxyacetone-P role is filled by Lys225.

Belongs to the class I fructose-bisphosphate aldolase family.

The protein localises to the plastid. It is found in the chloroplast. It carries out the reaction beta-D-fructose 1,6-bisphosphate = D-glyceraldehyde 3-phosphate + dihydroxyacetone phosphate. It functions in the pathway carbohydrate degradation; glycolysis; D-glyceraldehyde 3-phosphate and glycerone phosphate from D-glucose: step 4/4. In Pisum sativum (Garden pea), this protein is Fructose-bisphosphate aldolase 1, chloroplastic.